The chain runs to 76 residues: Exodeoxyribonuclease 7 small subunit (76 aa).

It belongs to the XseB family. As to quaternary structure, heterooligomer composed of large and small subunits.

The protein localises to the cytoplasm. The catalysed reaction is Exonucleolytic cleavage in either 5'- to 3'- or 3'- to 5'-direction to yield nucleoside 5'-phosphates.. Its function is as follows. Bidirectionally degrades single-stranded DNA into large acid-insoluble oligonucleotides, which are then degraded further into small acid-soluble oligonucleotides. This is Exodeoxyribonuclease 7 small subunit from Geotalea daltonii (strain DSM 22248 / JCM 15807 / FRC-32) (Geobacter daltonii).